Reading from the N-terminus, the 369-residue chain is Phospho-N-acetylmuramoyl-pentapeptide-transferase (369 aa).

The next 10 helical transmembrane spans lie at 2–22, 55–75, 86–106, 122–142, 158–178, 196–216, 239–259, 266–286, 291–311, and 348–368; these read IALL…TPLF, TVVV…MWMM, ALLL…DDFI, LVLQ…FPNA, IPWL…FVLW, LDGL…LMGI, PLDL…FLWW, IFMG…FAIL, LLLA…IIQV, and ILGG…WVVL.

The protein belongs to the glycosyltransferase 4 family. MraY subfamily. The cofactor is Mg(2+).

Its subcellular location is the cell membrane. The catalysed reaction is UDP-N-acetyl-alpha-D-muramoyl-L-alanyl-gamma-D-glutamyl-meso-2,6-diaminopimeloyl-D-alanyl-D-alanine + di-trans,octa-cis-undecaprenyl phosphate = di-trans,octa-cis-undecaprenyl diphospho-N-acetyl-alpha-D-muramoyl-L-alanyl-D-glutamyl-meso-2,6-diaminopimeloyl-D-alanyl-D-alanine + UMP. The protein operates within cell wall biogenesis; peptidoglycan biosynthesis. In terms of biological role, catalyzes the initial step of the lipid cycle reactions in the biosynthesis of the cell wall peptidoglycan: transfers peptidoglycan precursor phospho-MurNAc-pentapeptide from UDP-MurNAc-pentapeptide onto the lipid carrier undecaprenyl phosphate, yielding undecaprenyl-pyrophosphoryl-MurNAc-pentapeptide, known as lipid I. The sequence is that of Phospho-N-acetylmuramoyl-pentapeptide-transferase from Arthrobacter sp. (strain FB24).